The sequence spans 339 residues: Adenylosuccinate synthetase (339 aa).

GTP contacts are provided by residues 12 to 18 (GDEGKGS) and 42 to 44 (GHS). Asp-13 acts as the Proton acceptor in catalysis. Mg(2+)-binding residues include Asp-13 and Gly-42. IMP-binding positions include 13 to 16 (DEGK), 40 to 43 (NAGH), Thr-127, Arg-141, Gln-179, Thr-194, and Arg-256. Residue His-43 is the Proton donor of the active site. Position 252-258 (252-258 (TVTGRRR)) interacts with substrate. Residues Arg-258, 284–286 (MLD), and 324–326 (KTG) each bind GTP.

It belongs to the adenylosuccinate synthetase family. In terms of assembly, homodimer. It depends on Mg(2+) as a cofactor.

It is found in the cytoplasm. It carries out the reaction IMP + L-aspartate + GTP = N(6)-(1,2-dicarboxyethyl)-AMP + GDP + phosphate + 2 H(+). The protein operates within purine metabolism; AMP biosynthesis via de novo pathway; AMP from IMP: step 1/2. Functionally, plays an important role in the de novo pathway of purine nucleotide biosynthesis. Catalyzes the first committed step in the biosynthesis of AMP from IMP. The sequence is that of Adenylosuccinate synthetase from Pyrococcus horikoshii (strain ATCC 700860 / DSM 12428 / JCM 9974 / NBRC 100139 / OT-3).